We begin with the raw amino-acid sequence, 86 residues long: Exodeoxyribonuclease 7 small subunit (86 aa).

Residues 1 to 26 (MQDELFETEKIPPKNTKNTKNAPKKS) are disordered.

The protein belongs to the XseB family. As to quaternary structure, heterooligomer composed of large and small subunits.

The protein localises to the cytoplasm. It catalyses the reaction Exonucleolytic cleavage in either 5'- to 3'- or 3'- to 5'-direction to yield nucleoside 5'-phosphates.. In terms of biological role, bidirectionally degrades single-stranded DNA into large acid-insoluble oligonucleotides, which are then degraded further into small acid-soluble oligonucleotides. The protein is Exodeoxyribonuclease 7 small subunit of Helicobacter pylori (strain ATCC 700392 / 26695) (Campylobacter pylori).